The chain runs to 696 residues: UvrABC system protein B (696 aa).

The Helicase ATP-binding domain occupies 46 to 433; sequence EGVEDGLSFQ…SGQTAEQVVR (388 aa). 59 to 66 is a binding site for ATP; the sequence is GVTGSGKT. The Beta-hairpin motif lies at 112 to 135; it reads YYDYYQPEAYVPQRDLFIEKDSSI. The region spanning 450 to 616 is the Helicase C-terminal domain; the sequence is QVDDVLSEIT…GVVKRIKDII (167 aa). The 36-residue stretch at 647–682 folds into the UVR domain; the sequence is AKEIKRLEKQMADYAKNLEFEKAAQTRDQLALLRER.

It belongs to the UvrB family. Forms a heterotetramer with UvrA during the search for lesions. Interacts with UvrC in an incision complex.

It localises to the cytoplasm. Functionally, the UvrABC repair system catalyzes the recognition and processing of DNA lesions. A damage recognition complex composed of 2 UvrA and 2 UvrB subunits scans DNA for abnormalities. Upon binding of the UvrA(2)B(2) complex to a putative damaged site, the DNA wraps around one UvrB monomer. DNA wrap is dependent on ATP binding by UvrB and probably causes local melting of the DNA helix, facilitating insertion of UvrB beta-hairpin between the DNA strands. Then UvrB probes one DNA strand for the presence of a lesion. If a lesion is found the UvrA subunits dissociate and the UvrB-DNA preincision complex is formed. This complex is subsequently bound by UvrC and the second UvrB is released. If no lesion is found, the DNA wraps around the other UvrB subunit that will check the other stand for damage. This chain is UvrABC system protein B, found in Burkholderia mallei (strain ATCC 23344).